We begin with the raw amino-acid sequence, 273 residues long: Type II iodothyronine deiodinase (273 aa).

Over 1–9 the chain is Lumenal; the sequence is MGILSVDLL. A helical; Signal-anchor for type III membrane protein membrane pass occupies residues 10-34; that stretch reads ITLQILPVFFSNCLFLALYDSVILL. Topologically, residues 35 to 273 are cytoplasmic; that stretch reads KHVVLLLSRS…KRUKKTRLAG (239 aa). Residue U133 is part of the active site. 2 non-standard amino acids (selenocysteine) are found at residues U133 and U266.

This sequence belongs to the iodothyronine deiodinase family. In terms of assembly, predominantly monomer. Can form homodimers but homodimerization is not essential for enzyme activity. Interacts with USP20 and USP33. Interacts with MARCHF6. Post-translationally, ubiquitinated by MARCHF6, leading to its degradation by the proteasome. Deubiquitinated by USP20 and USP33. In terms of tissue distribution, isoform 1 is expressed in the lung, trachea, kidney, heart, skeletal muscle, placenta, fetal brain and several regions of the adult brain. Isoform 2 is expressed in the brain, heart, kidney and trachea.

It localises to the endoplasmic reticulum membrane. It carries out the reaction 3,3',5-triiodo-L-thyronine + iodide + A + H(+) = L-thyroxine + AH2. The catalysed reaction is 3,3'-diiodo-L-thyronine + iodide + A + H(+) = 3,3',5'-triiodo-L-thyronine + AH2. The enzyme catalyses 3'-iodo-L-thyronine + iodide + A + H(+) = 3',5'-diiodo-L-thyronine + AH2. It catalyses the reaction 3,3'-diiodothyronamine + iodide + A + H(+) = 3,3',5'-triiodothyronamine + AH2. It carries out the reaction 3'-iodothyronamine + iodide + A + H(+) = 3',5'-diiodothyronamine + AH2. In terms of biological role, plays a crucial role in the metabolism of thyroid hormones (TH) and has specific roles in TH activation and inactivation by deiodination. Catalyzes the deiodination of L-thyroxine (T4) to 3,5,3'-triiodothyronine (T3), 3,3',5'-triiodothyronine (rT3) to 3,3'-diiodothyronine (3,3'-T2) and 3',5'-diiodothyronine (3',5'-T2) to 3'-monoiodothyronine (3'-T1) via outer-ring deiodination (ORD). Catalyzes the phenolic ring deiodinations of 3,3',5'-triiodothyronamine and 3',5'- diiodothyronamine. The protein is Type II iodothyronine deiodinase (DIO2) of Homo sapiens (Human).